Reading from the N-terminus, the 966-residue chain is Receptor protein-tyrosine kinase CEPR1 (966 aa).

Positions 1 to 22 (MRLKNFPFFVLFFFFCFNSNQS) are cleaved as a signal peptide. The Extracellular segment spans residues 23–592 (WGLMSSNQQP…QEPHGKKKLS (570 aa)). The N-linked (GlcNAc...) asparagine glycan is linked to Asn61. LRR repeat units lie at residues 70–94 (QGLVTDLDLSGLSLSGIFPDGVCSY), 95–120 (FPNLRVLRLSHNHLNKSSSFLNTIPN), 122–144 (SLLRDLNMSSVYLKGTLPDFSQM), 145–168 (KSLRVIDMSWNHFTGSFPLSIFNL), 170–194 (DLEYLNFNENPELDLWTLPDSVSKL), 195–218 (TKLTHMLLMTCMLHGNIPRSIGNL), 219–242 (TSLVDLELSGNFLSGEIPKEIGNL), 245–267 (LRQLELYYNYHLTGSIPEEIGNL), 268–291 (KNLTDIDISVSRLTGSIPDSICSL), 292–315 (PNLRVLQLYNNSLTGEIPKSLGNS), 317–339 (TLKILSLYDNYLTGELPPNLGSS), 341–363 (PMIALDVSENRLSGPLPAHVCKS), 365–386 (KLLYFLVLQNRFTGSIPETYGS), 387–411 (CKTLIRFRVASNRLVGTIPQGVMSL), 412–435 (PHVSIIDLAYNSLSGPIPNAIGNA), 437–459 (NLSELFMQSNRISGVIPHELSHS), 460–483 (TNLVKLDLSNNQLSGPIPSEVGRL), 484–507 (RKLNLLVLQGNHLDSSIPDSLSNL), 508–531 (KSLNVLDLSSNLLTGRIPENLSEL), and 533–554 (PTSINFSSNRLSGPIPVSLIRG). N-linked (GlcNAc...) asparagine glycosylation is found at Asn109, Asn120, Asn128, and Asn167. Residues Asn217 and Asn241 are each glycosylated (N-linked (GlcNAc...) asparagine). Asn269 and Asn301 each carry an N-linked (GlcNAc...) asparagine glycan. Asn437 carries N-linked (GlcNAc...) asparagine glycosylation. 2 N-linked (GlcNAc...) asparagine glycosylation sites follow: Asn527 and Asn537. A helical transmembrane segment spans residues 593–613 (SIWAILVSVFILVLGVIMFYL). The Cytoplasmic segment spans residues 614 to 966 (RQRMSKNRAV…VSDHLTQTRL (353 aa)). In terms of domain architecture, Protein kinase spans 656–934 (LVDKNIVGHG…TMNEVVQLLI (279 aa)). ATP is bound by residues 662–670 (VGHGGSGTV) and Lys684. A phosphotyrosine mark is found at Tyr738 and Tyr775. Asp788 functions as the Proton acceptor in the catalytic mechanism. 2 positions are modified to phosphotyrosine: Tyr831 and Tyr838. The tract at residues 937-966 (TPQGGPDMTSKPTTKIKDSIVSDHLTQTRL) is disordered.

Belongs to the protein kinase superfamily. Ser/Thr protein kinase family. In terms of assembly, interacts with the root-derived peptides CEP1, CEP3 and CEP5. Expressed in the vasculature, especially in phloem and procambium regions, of stems, leaves, cotyledons, sepals, pedals, pedicels, hypocotyls and roots (in primary and lateral roots, but not in root tips). Expressed in the root from the basal meristem onward. Present in the phloem pole pericycle and in the adjacent phloem.

It is found in the cell membrane. It catalyses the reaction L-tyrosyl-[protein] + ATP = O-phospho-L-tyrosyl-[protein] + ADP + H(+). In terms of biological role, receptor kinase involved in the perception of C-terminally encoded plant signaling peptide (CEP) and subsequent regulation of root and shoot development. Required for xylem and phloem cell files morphology and organization, probably by preventing ectopic lignification in phloem cells. Together with CEPR2, mediates systemic nitrogen (N)-demand signaling upon the perception of root-derived peptides (e.g. CEP1) via the up-regulation of genes involved in N uptake and assimilation pathways. Positively regulates lateral root initiation and development; probably repressed by the signaling peptide CEP5. This Arabidopsis thaliana (Mouse-ear cress) protein is Receptor protein-tyrosine kinase CEPR1.